Reading from the N-terminus, the 145-residue chain is 3-hydroxyacyl-[acyl-carrier-protein] dehydratase FabZ (145 aa).

The active site involves histidine 48.

It belongs to the thioester dehydratase family. FabZ subfamily.

It is found in the cytoplasm. The enzyme catalyses a (3R)-hydroxyacyl-[ACP] = a (2E)-enoyl-[ACP] + H2O. Involved in unsaturated fatty acids biosynthesis. Catalyzes the dehydration of short chain beta-hydroxyacyl-ACPs and long chain saturated and unsaturated beta-hydroxyacyl-ACPs. The polypeptide is 3-hydroxyacyl-[acyl-carrier-protein] dehydratase FabZ (Campylobacter hominis (strain ATCC BAA-381 / DSM 21671 / CCUG 45161 / LMG 19568 / NCTC 13146 / CH001A)).